Here is a 317-residue protein sequence, read N- to C-terminus: 4-hydroxy-3-methylbut-2-enyl diphosphate reductase (317 aa).

Cys-12 contacts [4Fe-4S] cluster. (2E)-4-hydroxy-3-methylbut-2-enyl diphosphate contacts are provided by His-41 and His-74. Dimethylallyl diphosphate is bound by residues His-41 and His-74. Residues His-41 and His-74 each coordinate isopentenyl diphosphate. Cys-96 contacts [4Fe-4S] cluster. His-124 serves as a coordination point for (2E)-4-hydroxy-3-methylbut-2-enyl diphosphate. Residue His-124 coordinates dimethylallyl diphosphate. An isopentenyl diphosphate-binding site is contributed by His-124. Glu-126 (proton donor) is an active-site residue. A (2E)-4-hydroxy-3-methylbut-2-enyl diphosphate-binding site is contributed by Thr-168. Cys-198 contacts [4Fe-4S] cluster. (2E)-4-hydroxy-3-methylbut-2-enyl diphosphate-binding residues include Ser-226, Ser-227, Asn-228, and Ser-270. Dimethylallyl diphosphate contacts are provided by Ser-226, Ser-227, Asn-228, and Ser-270. 4 residues coordinate isopentenyl diphosphate: Ser-226, Ser-227, Asn-228, and Ser-270.

It belongs to the IspH family. [4Fe-4S] cluster is required as a cofactor.

The enzyme catalyses isopentenyl diphosphate + 2 oxidized [2Fe-2S]-[ferredoxin] + H2O = (2E)-4-hydroxy-3-methylbut-2-enyl diphosphate + 2 reduced [2Fe-2S]-[ferredoxin] + 2 H(+). The catalysed reaction is dimethylallyl diphosphate + 2 oxidized [2Fe-2S]-[ferredoxin] + H2O = (2E)-4-hydroxy-3-methylbut-2-enyl diphosphate + 2 reduced [2Fe-2S]-[ferredoxin] + 2 H(+). The protein operates within isoprenoid biosynthesis; dimethylallyl diphosphate biosynthesis; dimethylallyl diphosphate from (2E)-4-hydroxy-3-methylbutenyl diphosphate: step 1/1. It participates in isoprenoid biosynthesis; isopentenyl diphosphate biosynthesis via DXP pathway; isopentenyl diphosphate from 1-deoxy-D-xylulose 5-phosphate: step 6/6. Catalyzes the conversion of 1-hydroxy-2-methyl-2-(E)-butenyl 4-diphosphate (HMBPP) into a mixture of isopentenyl diphosphate (IPP) and dimethylallyl diphosphate (DMAPP). Acts in the terminal step of the DOXP/MEP pathway for isoprenoid precursor biosynthesis. The polypeptide is 4-hydroxy-3-methylbut-2-enyl diphosphate reductase (Hahella chejuensis (strain KCTC 2396)).